The sequence spans 1350 residues: Probable serine/threonine-protein kinase irlE (1350 aa).

Asparagine 37 is a glycosylation site (N-linked (GlcNAc...) asparagine). Residues 149-169 (FWEILASCYGTISFIKFFNIF) traverse the membrane as a helical segment. The stretch at 731-802 (EAELKEKFEI…NIQQNYENQH (72 aa)) forms a coiled coil. Residues 761-771 (LKKKNKLKKQK) show a composition bias toward basic residues. Disordered regions lie at residues 761–795 (LKKK…QNIQ) and 807–864 (RKFN…TTNS). The segment covering 772 to 795 (NQQQQQQAKQQAQQQKQQHQQNIQ) has biased composition (low complexity). Over residues 809-823 (FNQQTKGRPISPSSI) the composition is skewed to polar residues. The span at 824 to 864 (QNQNLNPTLLQNQNQTSNPTPNLESTKKATPTTTTTTTTNS) shows a compositional bias: low complexity. Residues 903 to 1166 (KKESNILGRG…LSSVLKHPLF (264 aa)) enclose the Protein kinase domain. Residues 909-917 (LGRGSNGTL) and lysine 932 contribute to the ATP site. The active-site Proton acceptor is the aspartate 1034. Residues 1169–1346 (SLKKIKFLES…KNSIHFSNDT (178 aa)) enclose the KEN domain.

This sequence belongs to the protein kinase superfamily. Ser/Thr protein kinase family.

The protein resides in the membrane. It carries out the reaction L-seryl-[protein] + ATP = O-phospho-L-seryl-[protein] + ADP + H(+). The enzyme catalyses L-threonyl-[protein] + ATP = O-phospho-L-threonyl-[protein] + ADP + H(+). This chain is Probable serine/threonine-protein kinase irlE (irlE), found in Dictyostelium discoideum (Social amoeba).